The sequence spans 213 residues: Glycerol-3-phosphate acyltransferase (213 aa).

The next 6 helical transmembrane spans lie at 3-23 (ILLL…LWIG), 55-75 (ITFL…IWLG), 80-100 (SPLI…FTGF), 110-130 (AGVL…VFAL), 142-162 (SITA…IHFL), and 163-183 (LDGY…VIIF).

It belongs to the PlsY family. Probably interacts with PlsX.

Its subcellular location is the cell membrane. The catalysed reaction is an acyl phosphate + sn-glycerol 3-phosphate = a 1-acyl-sn-glycero-3-phosphate + phosphate. Its pathway is lipid metabolism; phospholipid metabolism. Functionally, catalyzes the transfer of an acyl group from acyl-phosphate (acyl-PO(4)) to glycerol-3-phosphate (G3P) to form lysophosphatidic acid (LPA). This enzyme utilizes acyl-phosphate as fatty acyl donor, but not acyl-CoA or acyl-ACP. The chain is Glycerol-3-phosphate acyltransferase from Streptococcus thermophilus (strain CNRZ 1066).